The chain runs to 304 residues: UDP-N-acetylenolpyruvoylglucosamine reductase (304 aa).

The FAD-binding PCMH-type domain maps to 33 to 198; that stretch reads KVGGPVDILL…LRATFNLVNG (166 aa). Arg-177 is a catalytic residue. The active-site Proton donor is the Ser-227. Glu-297 is a catalytic residue.

Belongs to the MurB family. Requires FAD as cofactor.

It is found in the cytoplasm. The catalysed reaction is UDP-N-acetyl-alpha-D-muramate + NADP(+) = UDP-N-acetyl-3-O-(1-carboxyvinyl)-alpha-D-glucosamine + NADPH + H(+). Its pathway is cell wall biogenesis; peptidoglycan biosynthesis. Its function is as follows. Cell wall formation. The polypeptide is UDP-N-acetylenolpyruvoylglucosamine reductase (Clostridium beijerinckii (strain ATCC 51743 / NCIMB 8052) (Clostridium acetobutylicum)).